Here is a 226-residue protein sequence, read N- to C-terminus: Deoxyribose-phosphate aldolase (226 aa).

Asp93 serves as the catalytic Proton donor/acceptor. Lys159 (schiff-base intermediate with acetaldehyde) is an active-site residue. The Proton donor/acceptor role is filled by Lys189.

It belongs to the DeoC/FbaB aldolase family. DeoC type 1 subfamily.

It is found in the cytoplasm. It catalyses the reaction 2-deoxy-D-ribose 5-phosphate = D-glyceraldehyde 3-phosphate + acetaldehyde. Its pathway is carbohydrate degradation; 2-deoxy-D-ribose 1-phosphate degradation; D-glyceraldehyde 3-phosphate and acetaldehyde from 2-deoxy-alpha-D-ribose 1-phosphate: step 2/2. In terms of biological role, catalyzes a reversible aldol reaction between acetaldehyde and D-glyceraldehyde 3-phosphate to generate 2-deoxy-D-ribose 5-phosphate. This is Deoxyribose-phosphate aldolase from Mycobacterium marinum (strain ATCC BAA-535 / M).